A 40-amino-acid polypeptide reads, in one-letter code: Snaclec LmrLEC-1 (40 aa).

A disulfide bond links C2 and C13.

This sequence belongs to the snaclec family. Dimer (non-covalently linked) of heterodimers of subunits alpha and beta (disulfide-linked). As to expression, expressed by the venom gland.

The protein localises to the secreted. Interferes with one step of hemostasis (modulation of platelet aggregation, or coagulation cascade, for example). This chain is Snaclec LmrLEC-1, found in Lachesis muta rhombeata (Bushmaster).